The chain runs to 461 residues: 3-oxoacyl-[acyl-carrier-protein] synthase, mitochondrial (461 aa).

The transit peptide at 1-28 (MATSNLRRHLSASRLRLNRFISTSSSYH) directs the protein to the mitochondrion. A Ketosynthase family 3 (KS3) domain is found at 30–460 (HRRVVVTGLG…GTNASLLFAS (431 aa)). Active-site for beta-ketoacyl synthase activity residues include cysteine 209, histidine 350, and histidine 389.

The protein belongs to the thiolase-like superfamily. Beta-ketoacyl-ACP synthases family. As to quaternary structure, homodimer. In terms of tissue distribution, expressed at the same level in leaves, roots, siliques and flowers.

The protein localises to the mitochondrion. The enzyme catalyses a fatty acyl-[ACP] + malonyl-[ACP] + H(+) = a 3-oxoacyl-[ACP] + holo-[ACP] + CO2. It catalyses the reaction butanoyl-[ACP] + malonyl-[ACP] + H(+) = 3-oxohexanoyl-[ACP] + holo-[ACP] + CO2. The catalysed reaction is hexanoyl-[ACP] + malonyl-[ACP] + H(+) = 3-oxooctanoyl-[ACP] + holo-[ACP] + CO2. It carries out the reaction octanoyl-[ACP] + malonyl-[ACP] + H(+) = 3-oxodecanoyl-[ACP] + holo-[ACP] + CO2. The enzyme catalyses decanoyl-[ACP] + malonyl-[ACP] + H(+) = 3-oxododecanoyl-[ACP] + holo-[ACP] + CO2. It catalyses the reaction dodecanoyl-[ACP] + malonyl-[ACP] + H(+) = 3-oxotetradecanoyl-[ACP] + holo-[ACP] + CO2. The catalysed reaction is tetradecanoyl-[ACP] + malonyl-[ACP] + H(+) = 3-oxohexadecanoyl-[ACP] + holo-[ACP] + CO2. It carries out the reaction hexadecanoyl-[ACP] + malonyl-[ACP] + H(+) = 3-oxooctadecanoyl-[ACP] + holo-[ACP] + CO2. It participates in lipid metabolism; fatty acid biosynthesis. Its activity is regulated as follows. Inhibited by cerulenin. In terms of biological role, catalyzes all the condensation reaction of fatty acid synthesis by the addition to an acyl acceptor of two carbons from malonyl-ACP. Able to elongate saturated acyl chains from 4 to at least 16 carbons. Uses malonyl-CoA but not acetyl-CoA as primer substrate. When expressed in a heterologous system, reveals a bimodal distribution of products, with peaks at C8 and C14-C16. The major product of the reaction (octanoyl-ACP) is required for the lipoylation of essential mitochondrial proteins. Required for mitochondrial fatty acid synthesis (mtFAS). MtFAS are essential for photorespiration and plant development, probably by influencing mitochondrial membrane lipid composition and other lipid metabolic pathways. The chain is 3-oxoacyl-[acyl-carrier-protein] synthase, mitochondrial from Arabidopsis thaliana (Mouse-ear cress).